The sequence spans 698 residues: Methionine--tRNA ligase (698 aa).

Positions 21 to 31 (PYANGPLHFGH) match the 'HIGH' region motif. Zn(2+) is bound by residues cysteine 153, cysteine 156, cysteine 166, and cysteine 169. A 'KMSKS' region motif is present at residues 341-345 (QFSKS). Lysine 344 lines the ATP pocket. The 100-residue stretch at 599 to 698 (DFRKLDLRVG…EDVAPGSLVS (100 aa)) folds into the tRNA-binding domain.

It belongs to the class-I aminoacyl-tRNA synthetase family. MetG type 1 subfamily. As to quaternary structure, homodimer. Zn(2+) is required as a cofactor.

The protein resides in the cytoplasm. The catalysed reaction is tRNA(Met) + L-methionine + ATP = L-methionyl-tRNA(Met) + AMP + diphosphate. Is required not only for elongation of protein synthesis but also for the initiation of all mRNA translation through initiator tRNA(fMet) aminoacylation. In Protochlamydia amoebophila (strain UWE25), this protein is Methionine--tRNA ligase.